The primary structure comprises 503 residues: Potassium voltage-gated channel subfamily V member 1 (503 aa).

2 disordered regions span residues 1 to 20 and 171 to 192; these read MDLS…DSGS and KKDT…QGPC. Over 3 to 213 the chain is Cytoplasmic; that stretch reads LSPRNRPLLD…EKPGSSTAAR (211 aa). A compositionally biased stretch (low complexity) spans 10–20; it reads LLDSSSLDSGS. Positions 171 to 184 are enriched in basic and acidic residues; sequence KKDTDDQESQHESE. Residues 214–234 traverse the membrane as a helical segment; that stretch reads IFGVISIIFVAVSIVNMALMS. Over 235–241 the chain is Extracellular; sequence AELSWLN. The helical transmembrane segment at 242–262 threads the bilayer; that stretch reads LQLLEILEYVCISWFTGEFIL. At 263 to 279 the chain is on the cytoplasmic side; sequence RFLCVKDRCHFLRKVPN. The helical transmembrane segment at 280–300 threads the bilayer; it reads IIDLLAILPFYITLLVESLSG. At 301–312 the chain is on the extracellular side; sequence SHTTQELENVGR. The helical; Voltage-sensor transmembrane segment at 313 to 334 threads the bilayer; sequence LVQVLRLLRALRMLKLGRHSTG. Topologically, residues 335-348 are cytoplasmic; the sequence is LRSLGMTITQCYEE. The helical transmembrane segment at 349-369 threads the bilayer; it reads VGLLLLFLSVGISIFSTIEYF. Residues 395–400 carry the Selectivity filter motif; that stretch reads TVGYGD. Residues 410–430 traverse the membrane as a helical segment; sequence IVAFMCILSGILVLALPIAII. The Cytoplasmic portion of the chain corresponds to 431-503; the sequence is NDRFSACYFT…RSSGGDDFWF (73 aa).

This sequence belongs to the potassium channel family. V (TC 1.A.1.2) subfamily. Kv8.1/KCNV1 sub-subfamily. In terms of assembly, heteromultimer with KCNB1 and KCNB2. Interacts with KCNC4 and KCND1. In terms of tissue distribution, detected in brain, in neocortex, olfactory tubercle, hippocampus, dentate gyrus, piriform cortex and amygdala. Detected in Purkinje cells and granular cells of the cerebellum, in hippocampal CA4 neurons and neocortex pyramidal cells.

It localises to the cell membrane. Functionally, potassium channel subunit that does not form functional channels by itself. Modulates KCNB1 and KCNB2 channel activity by shifting the threshold for inactivation to more negative values and by slowing the rate of inactivation. Can down-regulate the channel activity of KCNB1, KCNB2, KCNC4 and KCND1, possibly by trapping them in intracellular membranes. This chain is Potassium voltage-gated channel subfamily V member 1 (Kcnv1), found in Rattus norvegicus (Rat).